Reading from the N-terminus, the 176-residue chain is MSNKDNDLDDDFSLFREAVQGIKKLPQDTIVQQPNRNTKQKEIKRISREASDSEFYFSDEFVPLLSEEGPTRYARDDVSTYEVKRLRRGVYVPDVFLDMHGMTQQEAKRELGAMIAYCVKNEVHCACVQHGIGKHILKQKTPLWLAQHPDVLAFHQAPLEFGGDGALLVLLSIPEK.

The 76-residue stretch at 97–172 folds into the Smr domain; it reads LDMHGMTQQE…GDGALLVLLS (76 aa).

This sequence belongs to the SmrB family. As to quaternary structure, associates with collided ribosomes, but not with correctly translating polysomes.

Its function is as follows. Acts as a ribosome collision sensor. Detects stalled/collided disomes (pairs of ribosomes where the leading ribosome is stalled and a second ribosome has collided with it) and endonucleolytically cleaves mRNA at the 5' boundary of the stalled ribosome. Stalled/collided disomes form a new interface (primarily via the 30S subunits) that binds SmrB. Cleaved mRNA becomes available for tmRNA ligation, leading to ribosomal subunit dissociation and rescue of stalled ribosomes. The sequence is that of Ribosome rescue factor SmrB from Vibrio vulnificus (strain YJ016).